The primary structure comprises 314 residues: MKKKIAEYEVGEQVDVFLLIKTATKGIASNGKPFLTVILQDPSGDIEAKLWDVSPEVEKQYVAETIVKVAGDILNYKGRIQLRVKQIRVANENEVTDISDFVEKAPVKKEDMVEKITQYIFEMRNPNIQRLTRHLLNKHQNEFLEYPAATKNHHEFVSGLAYHVVSMLDLAKAISNLYPSLDKDLLYAGVILHDLGKVIELSGPISTTYTLEGNLLGHISIMVNEIGKAADELQIDAEEVLILQHIVLSHHGKAEWGSPKPPLVKEAEILHYIDNLDAKMNMMDRALGRTKPGEYTERVFALDNRSFYKPSFHN.

The region spanning histidine 163 to lysine 279 is the HD domain.

The protein belongs to the YhaM family.

In terms of biological role, shows a 3'-5' exoribonuclease activity. In Bacillus cereus (strain 03BB102), this protein is 3'-5' exoribonuclease YhaM.